We begin with the raw amino-acid sequence, 252 residues long: H-2 class II histocompatibility antigen, A-F beta chain (252 aa).

Residues 1 to 16 (AAVVVLMVLSSPGTEG) form the signal peptide. The tract at residues 17–109 (GNSERHFVSQ…VETPTSLRRL (93 aa)) is beta-1. Topologically, residues 17–213 (GNSERHFVSQ…RAQSESARSK (197 aa)) are extracellular. Intrachain disulfides connect cysteine 31–cysteine 93 and cysteine 132–cysteine 188. N-linked (GlcNAc...) asparagine glycosylation occurs at asparagine 35. Residues 110-203 (EQPNVVISLS…SLKSPITVEW (94 aa)) are beta-2. One can recognise an Ig-like C1-type domain in the interval 112–200 (PNVVISLSRT…EHPSLKSPIT (89 aa)). The segment at 204-213 (RAQSESARSK) is connecting peptide. The chain crosses the membrane as a helical span at residues 214–234 (MLSGIGGCVLGVIFLGLGLFI). Residues 235–252 (RYRSQKGPRGPPPAGLLQ) lie on the Cytoplasmic side of the membrane.

This sequence belongs to the MHC class II family. In terms of processing, ubiquitinated in immature dendritic cells leading to down-regulation of MHC class II.

The protein localises to the membrane. The polypeptide is H-2 class II histocompatibility antigen, A-F beta chain (H2-Ab1) (Mus musculus (Mouse)).